A 256-amino-acid polypeptide reads, in one-letter code: MGYLKRIGMCISLLIVIIFVTSCGGGNKITGDSKETQIKKSFAKTLDMYPIKNLEDLYDKEGYRDGEFKKGDKGMWTIYTDFAKSNKPGELDDEGMVLNLDRNTRTAKGYYFVKKFYEKDKLPDRKNYKVEMKNNKSILLDKVEDPNLKKRIENFKFFGQYANFKDLENYNNGDVSINWNVPSYDVEYKMSNKDENVKQLRSRYNIPTDKAPMLKMHIDGDLKGSSVGYKRLEIDFSKEDRDISVIDYLSYKPAKK.

Residues 1–22 form the signal peptide; sequence MGYLKRIGMCISLLIVIIFVTS. Cys-23 carries the N-palmitoyl cysteine lipid modification. The S-diacylglycerol cysteine moiety is linked to residue Cys-23.

The protein belongs to the staphylococcal tandem lipoprotein family.

The protein localises to the cell membrane. This is an uncharacterized protein from Staphylococcus aureus (strain MSSA476).